The chain runs to 1132 residues: Serine/threonine-protein kinase spk-1 (1132 aa).

Residues 75–95 form a helical membrane-spanning segment; it reads GGSLILTDIFPTVLFMFVVLF. Disordered regions lie at residues 240-388 and 419-481; these read NEDQ…DSDD and NKKA…KRGG. Composition is skewed to acidic residues over residues 281 to 290 and 311 to 336; these read SEDEDVESQE and DEPI…LGDE. The segment covering 362–372 has biased composition (low complexity); the sequence is DSSVSSSTSST. Residues 373-388 show a composition bias toward acidic residues; sequence PDDDEDDSATSYDSDD. Residues 421–433 are compositionally biased toward basic and acidic residues; that stretch reads KAEVNANEERMDD. The span at 434-443 shows a compositional bias: low complexity; sequence VSVSPGRSDS. Residues 495–1044 enclose the Protein kinase domain; the sequence is YHVIRKLGWG…ANDALKHPFL (550 aa). Residues 501-509 and lysine 524 each bind ATP; that span reads LGWGHFSTV. Aspartate 628 acts as the Proton acceptor in catalysis. Residues 1066–1121 are disordered; that stretch reads QVPEALDGNQEVYRDENDSNSASERSANRSAGSDDEEEFHMDRPGPSGVINEPADV. The span at 1084-1096 shows a compositional bias: low complexity; the sequence is SNSASERSANRSA.

This sequence belongs to the protein kinase superfamily. Ser/Thr protein kinase family.

The protein resides in the membrane. The enzyme catalyses L-seryl-[protein] + ATP = O-phospho-L-seryl-[protein] + ADP + H(+). The catalysed reaction is L-threonyl-[protein] + ATP = O-phospho-L-threonyl-[protein] + ADP + H(+). Required for embryogenesis and germline development in both adult hermaphrodites and males. SR-protein kinase (SRPK) that binds directly to and phosphorylates RS domains. The sequence is that of Serine/threonine-protein kinase spk-1 (spk-1) from Caenorhabditis briggsae.